Consider the following 142-residue polypeptide: Deoxyuridine 5'-triphosphate nucleotidohydrolase (142 aa).

Substrate contacts are provided by residues 62–64 (RSG), Asn-75, and 79–81 (TID).

It belongs to the dUTPase family. It depends on Mg(2+) as a cofactor.

The enzyme catalyses dUTP + H2O = dUMP + diphosphate + H(+). It participates in pyrimidine metabolism; dUMP biosynthesis; dUMP from dCTP (dUTP route): step 2/2. This enzyme is involved in nucleotide metabolism: it produces dUMP, the immediate precursor of thymidine nucleotides and it decreases the intracellular concentration of dUTP so that uracil cannot be incorporated into DNA. The protein is Deoxyuridine 5'-triphosphate nucleotidohydrolase of Picosynechococcus sp. (strain ATCC 27264 / PCC 7002 / PR-6) (Agmenellum quadruplicatum).